A 248-amino-acid polypeptide reads, in one-letter code: Probable transcriptional regulatory protein PsycPRwf_1013 (248 aa).

The protein belongs to the TACO1 family.

The protein localises to the cytoplasm. The polypeptide is Probable transcriptional regulatory protein PsycPRwf_1013 (Psychrobacter sp. (strain PRwf-1)).